We begin with the raw amino-acid sequence, 119 residues long: Holo-[acyl-carrier-protein] synthase (119 aa).

Residues Asp-8 and Glu-50 each contribute to the Mg(2+) site.

This sequence belongs to the P-Pant transferase superfamily. AcpS family. Mg(2+) is required as a cofactor.

The protein resides in the cytoplasm. The enzyme catalyses apo-[ACP] + CoA = holo-[ACP] + adenosine 3',5'-bisphosphate + H(+). In terms of biological role, transfers the 4'-phosphopantetheine moiety from coenzyme A to a Ser of acyl-carrier-protein. The polypeptide is Holo-[acyl-carrier-protein] synthase (Clavibacter sepedonicus (Clavibacter michiganensis subsp. sepedonicus)).